The primary structure comprises 166 residues: Eukaryotic translation initiation factor 5A (166 aa).

Residues 1-21 (MSDEDHDFSHQGGGDNASKTY) form a disordered region. A Hypusine modification is found at Lys53. The disordered stretch occupies residues 101–121 (EDPSLPSHLSLMDDEGESRED). A compositionally biased stretch (acidic residues) spans 112–121 (MDDEGESRED).

The protein belongs to the eIF-5A family. In terms of processing, lys-53 undergoes hypusination, a unique post-translational modification that consists in the addition of a butylamino group from spermidine to lysine side chain, leading to the formation of the unusual amino acid hypusine. eIF-5As are the only known proteins to undergo this modification, which is essential for their function.

The protein localises to the cytoplasm. Functionally, translation factor that promotes translation elongation and termination, particularly upon ribosome stalling at specific amino acid sequence contexts. Binds between the exit (E) and peptidyl (P) site of the ribosome and promotes rescue of stalled ribosome: specifically required for efficient translation of polyproline-containing peptides as well as other motifs that stall the ribosome. Acts as a ribosome quality control (RQC) cofactor by joining the RQC complex to facilitate peptidyl transfer during CAT tailing step. The chain is Eukaryotic translation initiation factor 5A from Leishmania donovani.